Here is a 298-residue protein sequence, read N- to C-terminus: uncharacterized protein (298 aa).

The disordered stretch occupies residues 264–298 (APPPPLPCITTGPAALEDSPKASKANKGKKAKAKK). Residues 287-298 (KANKGKKAKAKK) are compositionally biased toward basic residues.

This is an uncharacterized protein from Mus musculus (Mouse).